A 450-amino-acid polypeptide reads, in one-letter code: Beclin-1 (450 aa).

N-acetylmethionine is present on Met1. Residues Ser15 and Ser30 each carry the phosphoserine modification. The interval 48–72 (TTAQAKPGETQEEETNSGEEPFIET) is disordered. A phosphoserine; by AMPK mark is found at Ser90, Ser93, and Ser96. The BH3 motif lies at 108-127 (TMENLSRRLKVTGDLFDIMS). The interval 112-159 (LSRRLKVTGDLFDIMSGQTDVDHPLCEECTDTLLDQLDTQLNVTENEC) is interaction with BCL2 and BCL2L1. Residue Thr119 is modified to Phosphothreonine; by DAPK1. Positions 142 to 269 (DTLLDQLDTQ…QLDKLKKTNV (128 aa)) form a coiled coil. The interval 245-450 (DELKSVENQM…AWVSSQFYNK (206 aa)) is evolutionary conserved domain (ECD). Residues Lys402 and Lys437 each participate in a glycyl lysine isopeptide (Lys-Gly) (interchain with G-Cter in ubiquitin) cross-link. A required for membrane-association region spans residues 425-450 (WTKALKFMLTNLKWGLAWVSSQFYNK).

Belongs to the beclin family. In terms of assembly, a homodimeric form is proposed to exist; this metastable form readily transits to ATG14- or UVRAG-containing complexes with BECN1:UVRAG being more stable than BECN1:ATG14. Component of the PI3K (PI3KC3/PI3K-III/class III phosphatidylinositol 3-kinase) complex the core of which is composed of the catalytic subunit PIK3C3, the regulatory subunit PIK3R4 and BECN1 associating with additional regulatory/auxiliary subunits to form alternative complex forms. Alternative complex forms containing a fourth regulatory subunit in a mutually exclusive manner are PI3K complex I (PI3KC3-C1) containing ATG14, and PI3K complex II (PI3KC3-C2) containing UVRAG. PI3KC3-C1 displays a V-shaped architecture with PIK3R4 serving as a bridge between PIK3C3 and the ATG14:BECN1 subcomplex. Both, PI3KC3-C1 and PI3KC3-C2, can associate with further regulatory subunits, such as RUBCN, SH3GLB1/Bif-1 and AMBRA1. PI3KC3-C1 probably associates with PIK3CB. Forms a complex with PPP2CA and AMBRA1; AMBRA1 and BECN1 components of the complex regulate MYC stability via different pathways. Component of the complex, at least composed of LRPPRC, BECN1 and BCL2; the interactions prevent BECN1 from forming an autophagy-inducing complex with PIK3C3. Interacts with AMBRA1, GOPC, GRID2. Interacts with BCL2 and BCL2L1 isoform Bcl-X(L); the interaction inhibits BECN1 function in promoting autophagy by interfering with the formation of the PI3K complex. Interacts with cytosolic HMGB1; inhibits the interaction of BECN1 and BCL2 leading to promotion of autophagy. Interacts with USP10, USP13, VMP1, DAPK1, RAB39A. Interacts with the poly-Gln domain of ATXN3; the interaction causes deubiquitination at Lys-402 and stabilizes BECN1. Interacts with SLAMF1. Interacts with TRIM5; the interaction causes activation of BECN1 by causing its dissociation from its inhibitors BCL2 and TAB2. Interacts with active ULK1 (phosphorylated on 'Ser-317') and MEFV simultaneously. Interacts with WDR81 and WDR91; negatively regulates the PI3 kinase/PI3K activity associated with endosomal membranes. Interacts with LAPTM4B; competes with EGFR for LAPTM4B binding; regulates EGFR activity. Interacts with TRIM50. Interacts with TRIM16. Interacts with ATG14; this interaction is increased in the absence of TMEM39A. Interacts with WASHC1; preventing interaction with AMBRA1 and the DCX(AMBRA1) complex and subsequent ubiquitination. Interacts with TRIM17. Interacts with BCL2L10/BCL-B (via BH1 domain). Interacts with SH3BGRL. Interacts with IRGM; enhancing BECN1-interacting partners and influencing the composition of the BECN1 complex. Interacts with ARMC3. Interacts with LRPPRC. Phosphorylation at Thr-119 by DAPK1 reduces its interaction with BCL2 and BCL2L1 and promotes induction of autophagy. In response to autophagic stimuli, phosphorylated at serine residues by AMPK in an ATG14-dependent manner, and this phosphorylation is critical for maximally efficient autophagy. In terms of processing, polyubiquitinated by NEDD4, both with 'Lys-11'- and 'Lys-63'-linkages. 'Lys-11'-linked polyubiquitination leads to degradation and is enhanced when the stabilizing interaction partner VPS34 is depleted. Deubiquitinated by USP10 and USP13, leading to stabilize the PIK3C3/VPS34-containing complexes. Polyubiquitinated at Lys-402 with 'Lys-48'-linkages. 'Lys-48'-linked polyubiquitination of Lys-402 leads to degradation. Deubiquitinated by ATXN3, leading to stabilization. Ubiquitinated at Lys-437 via 'Lys-63'-linkage by the DCX(AMBRA1) complex, thereby increasing the association between BECN1 and PIK3C3 to promote PIK3C3 activity. 'Lys-48'-linked ubiquitination by RNF216 leads to proteasomal degradation and autophagy inhibition. Post-translationally, proteolytically processed by caspases including CASP8 and CASP3; the C-terminal fragments lack autophagy-inducing capacity and are proposed to induce apoptosis. Thus the cleavage is proposed to be an determinant to switch from autophagy to apoptosis pathways affecting cellular homeostasis including viral infections and survival of tumor cells.

It is found in the cytoplasm. Its subcellular location is the golgi apparatus. The protein resides in the trans-Golgi network membrane. The protein localises to the endosome membrane. It localises to the endoplasmic reticulum membrane. It is found in the mitochondrion membrane. Its subcellular location is the cytoplasmic vesicle. The protein resides in the autophagosome. The protein localises to the mitochondrion. It localises to the nucleus. In terms of biological role, plays a central role in autophagy. Acts as a core subunit of the PI3K complex that mediates formation of phosphatidylinositol 3-phosphate; different complex forms are believed to play a role in multiple membrane trafficking pathways: PI3KC3-C1 is involved in initiation of autophagosomes and PI3KC3-C2 in maturation of autophagosomes and endocytosis. Involved in regulation of degradative endocytic trafficking and required for the abscission step in cytokinesis, probably in the context of PI3KC3-C2. Essential for the formation of PI3KC3-C2 but not PI3KC3-C1 PI3K complex forms. Involved in endocytosis. May play a role in antiviral host defense. Its function is as follows. Beclin-1-C 35 kDa localized to mitochondria can promote apoptosis; it induces the mitochondrial translocation of BAX and the release of proapoptotic factors. The protein is Beclin-1 (BECN1) of Pongo abelii (Sumatran orangutan).